We begin with the raw amino-acid sequence, 433 residues long: Bifunctional protein GlmU (433 aa).

The segment at 1–226 is pyrophosphorylase; the sequence is MLSVIILAAG…EECFLGVNSQ (226 aa). UDP-N-acetyl-alpha-D-glucosamine is bound by residues 7 to 10, lysine 21, and 80 to 81; these read LAAG and GT. Aspartate 106 is a Mg(2+) binding site. Residues glycine 138, glutamate 152, asparagine 167, and asparagine 224 each coordinate UDP-N-acetyl-alpha-D-glucosamine. Asparagine 224 contributes to the Mg(2+) binding site. The segment at 227 to 247 is linker; sequence TERAKAEEIMLERLRKNAMDL. The tract at residues 248-433 is N-acetyltransferase; it reads GVVMQLPNSI…NGYFKFFKKP (186 aa). 2 residues coordinate UDP-N-acetyl-alpha-D-glucosamine: arginine 311 and lysine 328. Catalysis depends on histidine 339, which acts as the Proton acceptor. 2 residues coordinate UDP-N-acetyl-alpha-D-glucosamine: tyrosine 342 and asparagine 353. Acetyl-CoA contacts are provided by residues alanine 356, 362-363, serine 381, serine 399, and arginine 416; that span reads NY.

In the N-terminal section; belongs to the N-acetylglucosamine-1-phosphate uridyltransferase family. This sequence in the C-terminal section; belongs to the transferase hexapeptide repeat family. As to quaternary structure, homotrimer. Mg(2+) is required as a cofactor.

It is found in the cytoplasm. The catalysed reaction is alpha-D-glucosamine 1-phosphate + acetyl-CoA = N-acetyl-alpha-D-glucosamine 1-phosphate + CoA + H(+). It catalyses the reaction N-acetyl-alpha-D-glucosamine 1-phosphate + UTP + H(+) = UDP-N-acetyl-alpha-D-glucosamine + diphosphate. Its pathway is nucleotide-sugar biosynthesis; UDP-N-acetyl-alpha-D-glucosamine biosynthesis; N-acetyl-alpha-D-glucosamine 1-phosphate from alpha-D-glucosamine 6-phosphate (route II): step 2/2. It functions in the pathway nucleotide-sugar biosynthesis; UDP-N-acetyl-alpha-D-glucosamine biosynthesis; UDP-N-acetyl-alpha-D-glucosamine from N-acetyl-alpha-D-glucosamine 1-phosphate: step 1/1. It participates in bacterial outer membrane biogenesis; LPS lipid A biosynthesis. Its function is as follows. Catalyzes the last two sequential reactions in the de novo biosynthetic pathway for UDP-N-acetylglucosamine (UDP-GlcNAc). The C-terminal domain catalyzes the transfer of acetyl group from acetyl coenzyme A to glucosamine-1-phosphate (GlcN-1-P) to produce N-acetylglucosamine-1-phosphate (GlcNAc-1-P), which is converted into UDP-GlcNAc by the transfer of uridine 5-monophosphate (from uridine 5-triphosphate), a reaction catalyzed by the N-terminal domain. In Helicobacter pylori (strain ATCC 700392 / 26695) (Campylobacter pylori), this protein is Bifunctional protein GlmU.